We begin with the raw amino-acid sequence, 285 residues long: Transcription factor MYB15 (285 aa).

2 HTH myb-type domains span residues 9-61 (KMGL…MNYL) and 62-116 (KPDI…KKRL). 2 consecutive DNA-binding regions (H-T-H motif) follow at residues 37–61 (WRALPKQAGLLRCGKSCRLRWMNYL) and 89–112 (WSAIAAKLPGRTDNEIKNVWHTHL). Residues 115 to 172 (RLEDYQPAKPKTSNKKKGTKPKSESVITSSNSTRSESELADSSNPSGESLFSTSPSTS) are disordered. Residues 139 to 158 (SVITSSNSTRSESELADSSN) show a composition bias toward polar residues. The segment covering 159–172 (PSGESLFSTSPSTS) has biased composition (low complexity).

In terms of assembly, interacts with SCRM/ICE1. In terms of tissue distribution, expressed in roots, leaves, stems and flowers. Expressed in stomatal guard cells.

The protein resides in the nucleus. Functionally, transcription factor involved in cold-regulation of CBF genes and in the development of freezing tolerance. May be part of a complex network of transcription factors controlling the expression of CBF genes and other genes in response to cold stress. Binds to the MYB recognition sequences in the promoters of CBF1, CBF2 and CBF3 genes. Involved in drought and salt tolerance. May enhance expression levels of genes involved in abscisic acid (ABA) biosynthesis and signaling, as well as those encoding stress-protective proteins. This is Transcription factor MYB15 from Arabidopsis thaliana (Mouse-ear cress).